Here is a 133-residue protein sequence, read N- to C-terminus: MLQPKRTKFRKMHKGRNRGIVVNDKINFGTFALKSVDRGRLKSCQIESARRAITRAIKRQGKVWIRIFPDKPITQKPLEVRMGKGKGNVEYWVALVQPGKILYEMSGVSKELADHAFKLGSSKLPVRTVVTGI.

The protein belongs to the universal ribosomal protein uL16 family. As to quaternary structure, part of the 50S ribosomal subunit.

Functionally, binds 23S rRNA and is also seen to make contacts with the A and possibly P site tRNAs. The chain is Large ribosomal subunit protein uL16 from Blochmanniella floridana.